The following is a 423-amino-acid chain: Ornithine cyclodeaminase (423 aa).

10 residues coordinate NAD(+): Asn241, Ala242, Asp320, Thr352, Met353, Leu354, His355, Asp373, Asp396, and Val397.

It belongs to the AgrE/ArgZ ornithine cyclodeaminase family. It depends on NAD(+) as a cofactor.

The enzyme catalyses L-ornithine = L-proline + NH4(+). Functionally, catalyzes the conversion of ornithine to proline, with the release of ammonia. This chain is Ornithine cyclodeaminase, found in Methanocaldococcus jannaschii (strain ATCC 43067 / DSM 2661 / JAL-1 / JCM 10045 / NBRC 100440) (Methanococcus jannaschii).